A 247-amino-acid polypeptide reads, in one-letter code: Protein Thf1 (247 aa).

A coiled-coil region spans residues 198–224; the sequence is IAQVRQAMDDILEAQKKRREADQAKKE. The tract at residues 209–247 is disordered; it reads LEAQKKRREADQAKKEGSDDTPTTEASTPDSEPTSEVSS. Basic and acidic residues predominate over residues 210 to 226; sequence EAQKKRREADQAKKEGS. The segment covering 228-247 has biased composition (polar residues); it reads DTPTTEASTPDSEPTSEVSS.

It belongs to the THF1 family.

May be involved in photosynthetic membrane biogenesis. The polypeptide is Protein Thf1 (Acaryochloris marina (strain MBIC 11017)).